The sequence spans 122 residues: Dihydroneopterin aldolase (122 aa).

Substrate is bound by residues Glu-21, Tyr-53, and 72–73 (VE). Catalysis depends on Lys-98, which acts as the Proton donor/acceptor.

This sequence belongs to the DHNA family. Homooctamer.

The catalysed reaction is 7,8-dihydroneopterin = 6-hydroxymethyl-7,8-dihydropterin + glycolaldehyde. It catalyses the reaction 7,8-dihydroneopterin = 7,8-dihydromonapterin. It participates in cofactor biosynthesis; tetrahydrofolate biosynthesis; 2-amino-4-hydroxy-6-hydroxymethyl-7,8-dihydropteridine diphosphate from 7,8-dihydroneopterin triphosphate: step 3/4. Its function is as follows. Catalyzes the conversion of 7,8-dihydroneopterin to 6-hydroxymethyl-7,8-dihydropterin. Can use L-threo-dihydroneopterin and D-erythro-dihydroneopterin as substrates for the formation of 6-hydroxymethyldihydropterin, but it can also catalyze the epimerization of carbon 2' of dihydroneopterin to dihydromonapterin at appreciable velocity. This Escherichia coli O6:H1 (strain CFT073 / ATCC 700928 / UPEC) protein is Dihydroneopterin aldolase (folB).